We begin with the raw amino-acid sequence, 170 residues long: Peptide deformylase (170 aa).

Cys-94 and His-136 together coordinate Fe cation. Residue Glu-137 is part of the active site. His-140 is a Fe cation binding site.

Belongs to the polypeptide deformylase family. The cofactor is Fe(2+).

It catalyses the reaction N-terminal N-formyl-L-methionyl-[peptide] + H2O = N-terminal L-methionyl-[peptide] + formate. Removes the formyl group from the N-terminal Met of newly synthesized proteins. Requires at least a dipeptide for an efficient rate of reaction. N-terminal L-methionine is a prerequisite for activity but the enzyme has broad specificity at other positions. The sequence is that of Peptide deformylase from Agrobacterium fabrum (strain C58 / ATCC 33970) (Agrobacterium tumefaciens (strain C58)).